A 439-amino-acid chain; its full sequence is 23S rRNA (uracil(1939)-C(5))-methyltransferase RlmD (439 aa).

One can recognise a TRAM domain in the interval 10–68; that stretch reads QKKLRAAFTTIVQDLDYQGLGVAKIQGKTWFIENALPQEQVQVQVIEEKRQYGLGRVQK. [4Fe-4S] cluster is bound by residues cysteine 81, cysteine 87, cysteine 90, and cysteine 168. S-adenosyl-L-methionine is bound by residues glutamine 271, phenylalanine 300, asparagine 305, glutamate 321, aspartate 348, and aspartate 369. Cysteine 395 serves as the catalytic Nucleophile.

This sequence belongs to the class I-like SAM-binding methyltransferase superfamily. RNA M5U methyltransferase family. RlmD subfamily.

The catalysed reaction is uridine(1939) in 23S rRNA + S-adenosyl-L-methionine = 5-methyluridine(1939) in 23S rRNA + S-adenosyl-L-homocysteine + H(+). Its function is as follows. Catalyzes the formation of 5-methyl-uridine at position 1939 (m5U1939) in 23S rRNA. This chain is 23S rRNA (uracil(1939)-C(5))-methyltransferase RlmD, found in Histophilus somni (strain 129Pt) (Haemophilus somnus).